We begin with the raw amino-acid sequence, 578 residues long: Oxygen sensor histidine kinase response regulator DevS/DosS (578 aa).

GAF domains are found at residues 63–200 (DLEA…GIAV) and 231–369 (EPAT…ALAW). His-149 is a heme binding site. Residues 383-578 (VLTDRDRIAR…VLRWSAPLSQ (196 aa)) enclose the Histidine kinase domain. His-395 carries the phosphohistidine; by autocatalysis modification.

Mg(2+) serves as cofactor. The cofactor is heme.

It is found in the cytoplasm. It catalyses the reaction ATP + protein L-histidine = ADP + protein N-phospho-L-histidine.. Functionally, member of the two-component regulatory system DevR/DevS (DosR/DosS) involved in onset of the dormancy response. Regulates an approximately 48-member regulon. Required for full induction of the DevR (DosR) regulon; acts later than DosT to positively regulate expression of the DevR regulon during adaptation to anaerobiosis. Characterized as an oxygen sensor; O(2) acts as a switch, with O(2)-bound Fe(2+) protein inactive in autophosphorylation. Has also been suggested to act as a redox sensor, or perhaps as a dual oxygen/redox sensor. Donates a phosphate group to transcriptional regulator DevR (DosR). This is Oxygen sensor histidine kinase response regulator DevS/DosS (devS) from Mycobacterium tuberculosis (strain CDC 1551 / Oshkosh).